The primary structure comprises 328 residues: Ethanol acetyltransferase 1 (328 aa).

Positions 39-309 constitute an AB hydrolase-1 domain; the sequence is PAIINIHGLL…TGHNLLLENP (271 aa). Active-site charge relay system residues include Ser115, Asp139, and His302.

The protein belongs to the AB hydrolase superfamily.

The protein resides in the mitochondrion. It carries out the reaction ethanol + acetyl-CoA = ethyl acetate + CoA. It catalyses the reaction acetyl-CoA + H2O = acetate + CoA + H(+). The enzyme catalyses ethyl acetate + H2O = ethanol + acetate + H(+). Functionally, alcohol acetyltransferase that catalyzes the synthesis of ethyl acetate from ethanol and acetyl-CoA. Can also function as a thioesterase by hydrolyzing acetyl-CoA in the absence of ethanol, as well as esterase hydrolyzing ethyl acetate. This chain is Ethanol acetyltransferase 1, found in Saccharomyces cerevisiae (strain ATCC 204508 / S288c) (Baker's yeast).